Reading from the N-terminus, the 306-residue chain is D-alanine--D-alanine ligase B (306 aa).

Active-site residues include glutamate 15 and serine 150. One can recognise an ATP-grasp domain in the interval 101-303 (KLLWQGAGLP…FSQLVVRILE (203 aa)). Residue 134 to 189 (ISSLGLPVIVKPSREGSSVGMSKVVAENALQDALRLAFQHDEEVLIEKWLSGPEFT) participates in ATP binding. Residues aspartate 257, glutamate 270, and asparagine 272 each contribute to the Mg(2+) site. Residue serine 281 is part of the active site.

This sequence belongs to the D-alanine--D-alanine ligase family. In terms of assembly, monomer. The cofactor is Mg(2+). Mn(2+) serves as cofactor.

Its subcellular location is the cytoplasm. The catalysed reaction is 2 D-alanine + ATP = D-alanyl-D-alanine + ADP + phosphate + H(+). Its pathway is cell wall biogenesis; peptidoglycan biosynthesis. Its function is as follows. Cell wall formation. The protein is D-alanine--D-alanine ligase B of Escherichia coli O6:H1 (strain CFT073 / ATCC 700928 / UPEC).